Reading from the N-terminus, the 487-residue chain is Aspartyl/glutamyl-tRNA(Asn/Gln) amidotransferase subunit B (487 aa).

This sequence belongs to the GatB/GatE family. GatB subfamily. As to quaternary structure, heterotrimer of A, B and C subunits.

The catalysed reaction is L-glutamyl-tRNA(Gln) + L-glutamine + ATP + H2O = L-glutaminyl-tRNA(Gln) + L-glutamate + ADP + phosphate + H(+). It carries out the reaction L-aspartyl-tRNA(Asn) + L-glutamine + ATP + H2O = L-asparaginyl-tRNA(Asn) + L-glutamate + ADP + phosphate + 2 H(+). In terms of biological role, allows the formation of correctly charged Asn-tRNA(Asn) or Gln-tRNA(Gln) through the transamidation of misacylated Asp-tRNA(Asn) or Glu-tRNA(Gln) in organisms which lack either or both of asparaginyl-tRNA or glutaminyl-tRNA synthetases. The reaction takes place in the presence of glutamine and ATP through an activated phospho-Asp-tRNA(Asn) or phospho-Glu-tRNA(Gln). This is Aspartyl/glutamyl-tRNA(Asn/Gln) amidotransferase subunit B from Roseiflexus sp. (strain RS-1).